A 167-amino-acid chain; its full sequence is NADH-quinone oxidoreductase subunit B (167 aa).

Residues Cys-40, Cys-41, Cys-105, and Cys-134 each contribute to the [4Fe-4S] cluster site.

This sequence belongs to the complex I 20 kDa subunit family. NDH-1 is composed of 14 different subunits. Subunits NuoB, C, D, E, F, and G constitute the peripheral sector of the complex. The cofactor is [4Fe-4S] cluster.

It localises to the cell inner membrane. It catalyses the reaction a quinone + NADH + 5 H(+)(in) = a quinol + NAD(+) + 4 H(+)(out). In terms of biological role, NDH-1 shuttles electrons from NADH, via FMN and iron-sulfur (Fe-S) centers, to quinones in the respiratory chain. The immediate electron acceptor for the enzyme in this species is believed to be ubiquinone. Couples the redox reaction to proton translocation (for every two electrons transferred, four hydrogen ions are translocated across the cytoplasmic membrane), and thus conserves the redox energy in a proton gradient. This is NADH-quinone oxidoreductase subunit B from Campylobacter jejuni subsp. jejuni serotype O:2 (strain ATCC 700819 / NCTC 11168).